Reading from the N-terminus, the 89-residue chain is Small ribosomal subunit protein uS15 (89 aa).

Belongs to the universal ribosomal protein uS15 family. Part of the 30S ribosomal subunit. Forms a bridge to the 50S subunit in the 70S ribosome, contacting the 23S rRNA.

One of the primary rRNA binding proteins, it binds directly to 16S rRNA where it helps nucleate assembly of the platform of the 30S subunit by binding and bridging several RNA helices of the 16S rRNA. Functionally, forms an intersubunit bridge (bridge B4) with the 23S rRNA of the 50S subunit in the ribosome. This chain is Small ribosomal subunit protein uS15, found in Colwellia psychrerythraea (strain 34H / ATCC BAA-681) (Vibrio psychroerythus).